Here is a 184-residue protein sequence, read N- to C-terminus: Endoribonuclease YbeY (184 aa).

Composition is skewed to acidic residues over residues 1-11 (MTVEVGADENP) and 19-29 (DGAGDESDDED). The disordered stretch occupies residues 1-37 (MTVEVGADENPDFAHDETDGAGDESDDEDAQGRDPEL). Zn(2+) contacts are provided by His-146, His-150, and His-156.

This sequence belongs to the endoribonuclease YbeY family. The cofactor is Zn(2+).

Its subcellular location is the cytoplasm. Its function is as follows. Single strand-specific metallo-endoribonuclease involved in late-stage 70S ribosome quality control and in maturation of the 3' terminus of the 16S rRNA. The chain is Endoribonuclease YbeY from Burkholderia mallei (strain ATCC 23344).